The following is a 433-amino-acid chain: MRSHGQQISDRLTVEVDCHSLGPSECPSMTSSFSPLDSPTPTPTSLYSQGSMASPGWHEHPHYHHGVPMERRTSATPLRSAFRMADITSGDAMMNMPCGNMDRQDQMALPDYLPAYEENVDQLWIPQDMPKTYQEPQFPYHASMSQYNQMARNYYHRPQQAGYLPESASNPCLSRPIFTQPTERMPNSASMTNMLHWMPSHESLVPQTITPAQVQPFPSGPVTPPSSSYSDFPTNIPTFKSHTPSTPHRSVSMGTPSGSDTPVSRMSGHNDYQEEFQLSPVYREGMMQRHRQPSRKSSKKQLLRSNLSLENLPSIIKQVQFKCKEPGCKGRFKRQEHLKRHMKSHSKEKPHVCWVPGCHRAFSRSDNLNAHYTKTHSKRGGRNRYVATLDETSQDFDPDFRGQLTPDGRPIYGSKLEDSMPDCGELSVDGWDD.

Disordered regions lie at residues 23–54 (PSEC…SMAS) and 238–268 (TFKS…RMSG). Positions 30-48 (TSSFSPLDSPTPTPTSLYS) are enriched in low complexity. Residues 238-264 (TFKSHTPSTPHRSVSMGTPSGSDTPVS) are compositionally biased toward polar residues. C2H2-type zinc fingers lie at residues 321 to 345 (FKCK…MKSH) and 351 to 376 (HVCW…TKTH). Residues 391–423 (ETSQDFDPDFRGQLTPDGRPIYGSKLEDSMPDC) form a disordered region.

The protein localises to the nucleus. BrlA, abaA and wetA are pivotal regulators of conidiophore development and conidium maturation. They act individually and together to regulate their own expression and that of numerous other sporulation-specific genes. Binds promoters of target genes at brlA response elements (BREs) containing the conserved sequence 5'-(C/A)(A/G)AGGG(G/A)-3'. The protein is C2H2 type master regulator of conidiophore development brlA of Penicillium camemberti (strain FM 013).